The primary structure comprises 183 residues: Microfibrillar-associated protein 2 (183 aa).

The or 18 signal peptide spans 1 to 16 (MRAACLFLLFMPGLLA). A Pyrrolidone carboxylic acid modification is found at Q17. Sulfotyrosine occurs at positions 46, 47, and 49. The segment at 52 to 92 (VSPRTPEEQFQSQQQVQQEVIPAPTPEPAAAGDLETEPTEP) is disordered. A compositionally biased stretch (low complexity) spans 59-70 (EQFQSQQQVQQE). One can recognise a ShKT domain in the interval 153–183 (CRDKFSKCGVMAVSGLCQSVAASCARSCGGC). 3 cysteine pairs are disulfide-bonded: C153/C183, C160/C176, and C169/C180.

It belongs to the MFAP family. Forms a ternary complex with BGN and ELN. Interacts with FBN1 (via N-terminal domain) and FBN2. Forms intermolecular disulfide bonds either with other MAGP-1 molecules or with other components of the microfibrils. May form transglutaminase cross-links. Post-translationally, O-glycosylated.

The protein localises to the secreted. The protein resides in the extracellular space. It localises to the extracellular matrix. Its function is as follows. Component of the elastin-associated microfibrils. The protein is Microfibrillar-associated protein 2 (Mfap2) of Mus musculus (Mouse).